The sequence spans 267 residues: 5'-nucleotidase SurE (267 aa).

4 residues coordinate a divalent metal cation: Asp-9, Asp-10, Ser-41, and Asn-95.

The protein belongs to the SurE nucleotidase family. A divalent metal cation serves as cofactor.

The protein localises to the cytoplasm. It catalyses the reaction a ribonucleoside 5'-phosphate + H2O = a ribonucleoside + phosphate. Nucleotidase that shows phosphatase activity on nucleoside 5'-monophosphates. The polypeptide is 5'-nucleotidase SurE (Aeropyrum pernix (strain ATCC 700893 / DSM 11879 / JCM 9820 / NBRC 100138 / K1)).